Reading from the N-terminus, the 344-residue chain is N-acetyl-gamma-glutamyl-phosphate reductase (344 aa).

C150 is a catalytic residue.

This sequence belongs to the NAGSA dehydrogenase family. Type 1 subfamily.

The protein resides in the cytoplasm. It carries out the reaction N-acetyl-L-glutamate 5-semialdehyde + phosphate + NADP(+) = N-acetyl-L-glutamyl 5-phosphate + NADPH + H(+). Its pathway is amino-acid biosynthesis; L-arginine biosynthesis; N(2)-acetyl-L-ornithine from L-glutamate: step 3/4. In terms of biological role, catalyzes the NADPH-dependent reduction of N-acetyl-5-glutamyl phosphate to yield N-acetyl-L-glutamate 5-semialdehyde. In Pseudomonas syringae pv. syringae (strain B728a), this protein is N-acetyl-gamma-glutamyl-phosphate reductase.